A 508-amino-acid chain; its full sequence is Pancreatic alpha-amylase 2a5 (508 aa).

Residues 1-15 (MKFVLLLSLIGFCWA) form the signal peptide. Glutamine 16 is subject to Pyrrolidone carboxylic acid. Disulfide bonds link cysteine 43–cysteine 101, cysteine 85–cysteine 130, and cysteine 156–cysteine 172. Ca(2+)-binding residues include asparagine 115, arginine 170, and aspartate 179. Position 207 (arginine 207) interacts with chloride. The Nucleophile role is filled by aspartate 209. Histidine 213 serves as a coordination point for Ca(2+). The active-site Proton donor is glutamate 245. The chloride site is built by asparagine 310 and arginine 349. Intrachain disulfides connect cysteine 390-cysteine 396 and cysteine 462-cysteine 474.

This sequence belongs to the glycosyl hydrolase 13 family. Monomer. The cofactor is Ca(2+). It depends on chloride as a cofactor.

It localises to the secreted. Its subcellular location is the extracellular space. The catalysed reaction is Endohydrolysis of (1-&gt;4)-alpha-D-glucosidic linkages in polysaccharides containing three or more (1-&gt;4)-alpha-linked D-glucose units.. This is Pancreatic alpha-amylase 2a5 from Mus musculus (Mouse).